The following is a 598-amino-acid chain: Nicotinamide riboside transporter 1 (598 aa).

The next 11 membrane-spanning stretches (helical) occupy residues leucine 48–leucine 68, glycine 71–phenylalanine 91, phenylalanine 112–valine 132, leucine 174–histidine 194, tyrosine 197–leucine 217, alanine 241–asparagine 261, leucine 273–phenylalanine 293, glycine 372–serine 392, phenylalanine 395–cysteine 415, alanine 447–asparagine 467, and serine 484–phenylalanine 504. 2 positions are modified to phosphoserine: serine 560 and serine 572.

This sequence belongs to the purine-cytosine permease (2.A.39) family.

The protein localises to the cell membrane. In terms of biological role, high-affinity pH-dependent nicotinamide riboside transporter which also transports thiamine with low affinity. Involved in 5-fluorocytosine sensitivity. This chain is Nicotinamide riboside transporter 1 (NRT1), found in Saccharomyces cerevisiae (strain ATCC 204508 / S288c) (Baker's yeast).